Reading from the N-terminus, the 168-residue chain is MARNVGFFICILILAMDVSAGILGIEAEIAQNKVKHLKMWIFECRDPSYTAFKYGLAACILLVLAHVTANFLGGCLCVASRQDLEKSSANKQLAVASLIFTWIILAIAFSMLIVGTMANSRSRKNCGISHHRVLSIGGILCFVHGLFAVAYYISATASTREQTSAGHA.

Residues 1 to 20 form the signal peptide; it reads MARNVGFFICILILAMDVSA. Helical transmembrane passes span 56–76, 94–114, and 133–153; these read LAAC…GGCL, AVAS…MLIV, and VLSI…AYYI.

Belongs to the DESIGUAL family. Mainly expressed in roots, inflorescences and developing leaves, and, at low levels, in mature leaves.

The protein localises to the endoplasmic reticulum membrane. In terms of biological role, involved, partially redundantly with VCC/DEAL1 and DEAL3, to ensure bilateral symmetry development and early leaf margin patterning, probably via the regulation of auxin and CUC2 distribution. This Arabidopsis thaliana (Mouse-ear cress) protein is Protein DESIGUAL 2.